Reading from the N-terminus, the 385-residue chain is Zinc finger protein B385R (385 aa).

The segment at 166–190 (LQCPNCGCIQELMGTIFDETHFYNH) adopts a C2H2-type zinc-finger fold.

It belongs to the asfivirus B385R family.

The sequence is that of Zinc finger protein B385R from Ornithodoros (relapsing fever ticks).